The following is a 1512-amino-acid chain: Sterol 3-beta-glucosyltransferase (1512 aa).

2 disordered regions span residues phenylalanine 22–leucine 50 and aspartate 150–valine 222. Acidic residues predominate over residues serine 156–isoleucine 169. Positions threonine 190 to valine 222 are enriched in low complexity. The GRAM 1 domain maps to leucine 296–aspartate 331. The PH domain occupies serine 359 to phenylalanine 520. The 65-residue stretch at arginine 816–arginine 880 folds into the GRAM 2 domain. UDP-alpha-D-glucose contacts are provided by serine 1024, arginine 1025, aspartate 1027, asparagine 1299, isoleucine 1328, histidine 1330, histidine 1343, serine 1346, glycine 1347, threonine 1348, aspartate 1367, and glutamine 1368. The disordered stretch occupies residues tyrosine 1450–asparagine 1512. A compositionally biased stretch (acidic residues) spans threonine 1467–serine 1493. The span at glycine 1501–asparagine 1512 shows a compositional bias: polar residues.

The protein belongs to the glycosyltransferase 28 family.

Its subcellular location is the cytoplasm. It localises to the membrane. It carries out the reaction a sterol + UDP-alpha-D-glucose = a sterol 3-beta-D-glucoside + UDP + H(+). The enzyme catalyses ergosterol + UDP-alpha-D-glucose = ergosteryl 3-beta-D-glucoside + UDP + H(+). Sterol glycosyltransferase responsible for the glycosylation of ergosterol to form ergosterol-glucoside. This is Sterol 3-beta-glucosyltransferase from Candida albicans (strain SC5314 / ATCC MYA-2876) (Yeast).